A 403-amino-acid chain; its full sequence is Imidazolonepropionase (403 aa).

Fe(3+) contacts are provided by histidine 69 and histidine 71. 2 residues coordinate Zn(2+): histidine 69 and histidine 71. Residues arginine 78, tyrosine 141, and histidine 174 each coordinate 4-imidazolone-5-propanoate. An N-formimidoyl-L-glutamate-binding site is contributed by tyrosine 141. Histidine 239 serves as a coordination point for Fe(3+). Histidine 239 contacts Zn(2+). Glutamine 242 serves as a coordination point for 4-imidazolone-5-propanoate. Aspartate 314 provides a ligand contact to Fe(3+). Zn(2+) is bound at residue aspartate 314. 2 residues coordinate N-formimidoyl-L-glutamate: asparagine 316 and glycine 318. Serine 319 is a 4-imidazolone-5-propanoate binding site.

This sequence belongs to the metallo-dependent hydrolases superfamily. HutI family. Zn(2+) is required as a cofactor. The cofactor is Fe(3+).

It localises to the cytoplasm. The enzyme catalyses 4-imidazolone-5-propanoate + H2O = N-formimidoyl-L-glutamate. Its pathway is amino-acid degradation; L-histidine degradation into L-glutamate; N-formimidoyl-L-glutamate from L-histidine: step 3/3. Catalyzes the hydrolytic cleavage of the carbon-nitrogen bond in imidazolone-5-propanoate to yield N-formimidoyl-L-glutamate. It is the third step in the universal histidine degradation pathway. In Legionella pneumophila (strain Paris), this protein is Imidazolonepropionase.